We begin with the raw amino-acid sequence, 196 residues long: ATP-dependent Clp protease proteolytic subunit (196 aa).

Catalysis depends on Ser-101, which acts as the Nucleophile. His-126 is an active-site residue.

This sequence belongs to the peptidase S14 family. Component of the chloroplastic Clp protease core complex.

It localises to the plastid. The protein localises to the chloroplast stroma. The catalysed reaction is Hydrolysis of proteins to small peptides in the presence of ATP and magnesium. alpha-casein is the usual test substrate. In the absence of ATP, only oligopeptides shorter than five residues are hydrolyzed (such as succinyl-Leu-Tyr-|-NHMec, and Leu-Tyr-Leu-|-Tyr-Trp, in which cleavage of the -Tyr-|-Leu- and -Tyr-|-Trp bonds also occurs).. In terms of biological role, cleaves peptides in various proteins in a process that requires ATP hydrolysis. Has a chymotrypsin-like activity. Plays a major role in the degradation of misfolded proteins. The polypeptide is ATP-dependent Clp protease proteolytic subunit (Panax ginseng (Korean ginseng)).